The sequence spans 450 residues: Phosphoglucosamine mutase (450 aa).

The Phosphoserine intermediate role is filled by S101. Positions 101, 242, 244, and 246 each coordinate Mg(2+). Phosphoserine is present on S101.

Belongs to the phosphohexose mutase family. The cofactor is Mg(2+). Activated by phosphorylation.

The enzyme catalyses alpha-D-glucosamine 1-phosphate = D-glucosamine 6-phosphate. Functionally, catalyzes the conversion of glucosamine-6-phosphate to glucosamine-1-phosphate. This is Phosphoglucosamine mutase from Rhodopseudomonas palustris (strain BisB5).